Reading from the N-terminus, the 363-residue chain is Teichoic acids export ATP-binding protein TagH (363 aa).

In terms of domain architecture, ABC transporter spans 27–246 (KHFFNIGNVD…YRKFSKDFKA (220 aa)). Position 60-67 (60-67 (GINGSGKS)) interacts with ATP. The segment at 247-363 (QTAAYRKKYQ…KSQSVLFNSK (117 aa)) is unknown.

Belongs to the ABC transporter superfamily. Teichoic acids exporter (TC 3.A.1.104.1) family. The complex is composed of two ATP-binding proteins (TagH) and two transmembrane proteins (TagG).

The protein resides in the cell membrane. The catalysed reaction is ATP + H2O + teichoic acidSide 1 = ADP + phosphate + teichoic acidSide 2.. Its function is as follows. Part of the ABC transporter complex TagGH involved in teichoic acids export. Responsible for energy coupling to the transport system. The sequence is that of Teichoic acids export ATP-binding protein TagH from Lactiplantibacillus plantarum (strain ATCC BAA-793 / NCIMB 8826 / WCFS1) (Lactobacillus plantarum).